Consider the following 279-residue polypeptide: Very long chain fatty acid elongase 1 (279 aa).

Position 1 is an N-acetylmethionine (Met1). 7 helical membrane-spanning segments follow: residues 23 to 43 (PLMG…YFVL), 61 to 81 (FMIV…YEFL), 110 to 130 (VAWL…IFIL), 137 to 154 (VTFL…SWWW), 176 to 196 (VIMY…PYLW), 201 to 221 (MTAI…QYYF), and 231 to 251 (VIIH…SNFW). The Di-lysine motif signature appears at 275-279 (KVKAN).

Belongs to the ELO family. ELOVL1 subfamily. Interacts with LASS2 and HSD17B12. Interacts with TECR. In terms of tissue distribution, ubiquitous.

The protein localises to the endoplasmic reticulum membrane. The enzyme catalyses a very-long-chain acyl-CoA + malonyl-CoA + H(+) = a very-long-chain 3-oxoacyl-CoA + CO2 + CoA. It catalyses the reaction eicosanoyl-CoA + malonyl-CoA + H(+) = 3-oxodocosanoyl-CoA + CO2 + CoA. The catalysed reaction is (11Z)-eicosenoyl-CoA + malonyl-CoA + H(+) = 3-oxo-(13Z)-docosenoyl-CoA + CO2 + CoA. It carries out the reaction docosanoyl-CoA + malonyl-CoA + H(+) = 3-oxotetracosanoyl-CoA + CO2 + CoA. The enzyme catalyses (13Z)-docosenoyl-CoA + malonyl-CoA + H(+) = 3-oxo-(15Z)-tetracosenoyl-CoA + CO2 + CoA. It catalyses the reaction tetracosanoyl-CoA + malonyl-CoA + H(+) = 3-oxohexacosanoyl-CoA + CO2 + CoA. The catalysed reaction is hexacosanoyl-CoA + malonyl-CoA + H(+) = 3-oxooctacosanyol-CoA + CO2 + CoA. It carries out the reaction octadecanoyl-CoA + malonyl-CoA + H(+) = 3-oxoeicosanoyl-CoA + CO2 + CoA. It functions in the pathway lipid metabolism; fatty acid biosynthesis. Catalyzes the first and rate-limiting reaction of the four reactions that constitute the long-chain fatty acids elongation cycle. This endoplasmic reticulum-bound enzymatic process allows the addition of 2 carbons to the chain of long- and very long-chain fatty acids (VLCFAs) per cycle. Condensing enzyme that exhibits activity toward saturated and monounsaturated acyl-CoA substrates, with the highest activity towards C22:0 acyl-CoA. May participate in the production of both saturated and monounsaturated VLCFAs of different chain lengths that are involved in multiple biological processes as precursors of membrane lipids and lipid mediators. Important for saturated C24:0 and monounsaturated C24:1 sphingolipid synthesis. Indirectly inhibits RPE65 via production of VLCFAs. The protein is Very long chain fatty acid elongase 1 of Homo sapiens (Human).